The following is a 719-amino-acid chain: Phosphoribosylformylglycinamidine synthase subunit PurL (719 aa).

His47 is a catalytic residue. Residues Tyr50 and Lys89 each contribute to the ATP site. Glu91 contributes to the Mg(2+) binding site. Substrate is bound by residues 92 to 95 (SHNH) and Arg114. His93 (proton acceptor) is an active-site residue. Position 115 (Asp115) interacts with Mg(2+). Gln238 lines the substrate pocket. Asp266 serves as a coordination point for Mg(2+). Substrate is bound at residue 310-312 (ESQ). The ATP site is built by Asp488 and Gly525. Position 526 (Asn526) interacts with Mg(2+). Ser528 serves as a coordination point for substrate.

This sequence belongs to the FGAMS family. Monomer. Part of the FGAM synthase complex composed of 1 PurL, 1 PurQ and 2 PurS subunits.

The protein localises to the cytoplasm. It catalyses the reaction N(2)-formyl-N(1)-(5-phospho-beta-D-ribosyl)glycinamide + L-glutamine + ATP + H2O = 2-formamido-N(1)-(5-O-phospho-beta-D-ribosyl)acetamidine + L-glutamate + ADP + phosphate + H(+). It participates in purine metabolism; IMP biosynthesis via de novo pathway; 5-amino-1-(5-phospho-D-ribosyl)imidazole from N(2)-formyl-N(1)-(5-phospho-D-ribosyl)glycinamide: step 1/2. In terms of biological role, part of the phosphoribosylformylglycinamidine synthase complex involved in the purines biosynthetic pathway. Catalyzes the ATP-dependent conversion of formylglycinamide ribonucleotide (FGAR) and glutamine to yield formylglycinamidine ribonucleotide (FGAM) and glutamate. The FGAM synthase complex is composed of three subunits. PurQ produces an ammonia molecule by converting glutamine to glutamate. PurL transfers the ammonia molecule to FGAR to form FGAM in an ATP-dependent manner. PurS interacts with PurQ and PurL and is thought to assist in the transfer of the ammonia molecule from PurQ to PurL. This chain is Phosphoribosylformylglycinamidine synthase subunit PurL, found in Roseobacter denitrificans (strain ATCC 33942 / OCh 114) (Erythrobacter sp. (strain OCh 114)).